The primary structure comprises 278 residues: Sulfate transport system permease protein CysT (278 aa).

Helical transmembrane passes span 22 to 42, 67 to 87, 102 to 122, 139 to 159, 188 to 208, 217 to 237, and 246 to 266; these read FTWV…FLKS, FGLS…IAWV, FIDL…ATVY, IAFT…PFVV, FWRV…AQGF, SVVI…VLIF, and AGAT…LFVI. The ABC transmembrane type-1 domain maps to 63 to 266; the sequence is YEVTFGLSLA…LFSLVILFVI (204 aa).

This sequence belongs to the binding-protein-dependent transport system permease family. CysTW subfamily. As to quaternary structure, the complex is composed of two ATP-binding proteins (CysA), two transmembrane proteins (CysT and CysW) and a solute-binding protein (CysP).

The protein resides in the cell inner membrane. Part of the ABC transporter complex CysAWTP (TC 3.A.1.6.1) involved in sulfate/thiosulfate import. Probably responsible for the translocation of the substrate across the membrane. This chain is Sulfate transport system permease protein CysT (cysT), found in Synechococcus elongatus (strain ATCC 33912 / PCC 7942 / FACHB-805) (Anacystis nidulans R2).